A 167-amino-acid polypeptide reads, in one-letter code: Probable chorismate pyruvate-lyase (167 aa).

The substrate site is built by R71, I110, and E150.

It belongs to the UbiC family.

It localises to the cytoplasm. It catalyses the reaction chorismate = 4-hydroxybenzoate + pyruvate. Its pathway is cofactor biosynthesis; ubiquinone biosynthesis. Removes the pyruvyl group from chorismate, with concomitant aromatization of the ring, to provide 4-hydroxybenzoate (4HB) for the ubiquinone pathway. The protein is Probable chorismate pyruvate-lyase of Acinetobacter baylyi (strain ATCC 33305 / BD413 / ADP1).